A 301-amino-acid polypeptide reads, in one-letter code: UDP-N-acetylenolpyruvoylglucosamine reductase 1 (301 aa).

The FAD-binding PCMH-type domain occupies 29-196 (KIGGPADILI…LEAEFQLQIG (168 aa)). Residue arginine 174 is part of the active site. The Proton donor role is filled by serine 225. Residue glutamate 295 is part of the active site.

The protein belongs to the MurB family. Requires FAD as cofactor.

Its subcellular location is the cytoplasm. It catalyses the reaction UDP-N-acetyl-alpha-D-muramate + NADP(+) = UDP-N-acetyl-3-O-(1-carboxyvinyl)-alpha-D-glucosamine + NADPH + H(+). It functions in the pathway cell wall biogenesis; peptidoglycan biosynthesis. Its function is as follows. Cell wall formation. The chain is UDP-N-acetylenolpyruvoylglucosamine reductase 1 (murB1) from Bacillus anthracis.